The sequence spans 653 residues: Rab proteins geranylgeranyltransferase component A 1 (653 aa).

A disordered region spans residues Pro-606–Glu-653. Positions Pro-623–Gly-646 are enriched in polar residues.

Belongs to the Rab GDI family. Monomer. Heterotrimer composed of RABGGTA, RABGGTB and CHM; within this trimer, RABGGTA and RABGGTB form the catalytic component B, while CHM (component A) mediates Rab protein binding. Can associate with the Rab GGTase dimer (RGGT or component B) prior to Rab protein binding; the association is stabilized by geranylgeranyl pyrophosphate (GGpp). The CHM:RGGT:Rab complex is destabilized by GGpp. Interacts with RAB1A, RAB1B, RAB5A, RAB7A and RAB27A and mediates their prenylation. Interacts with the non-phosphorylated forms of RAB3A, RAB3B, RAB3C, RAB3D, RAB5B, RAB5C, RAB8A, RAB8B, RAB10, RAB12, RAB35, and RAB43.

It is found in the cytoplasm. It localises to the cytosol. Its function is as follows. Substrate-binding subunit of the Rab geranylgeranyltransferase (GGTase) complex. Binds unprenylated Rab proteins and presents the substrate peptide to the catalytic component B composed of RABGGTA and RABGGTB, and remains bound to it after the geranylgeranyl transfer reaction. The component A is thought to be regenerated by transferring its prenylated Rab back to the donor membrane. Besides, a pre-formed complex consisting of CHM and the Rab GGTase dimer (RGGT or component B) can bind to and prenylate Rab proteins; this alternative pathway is proposed to be the predominant pathway for Rab protein geranylgeranylation. This is Rab proteins geranylgeranyltransferase component A 1 (CHM) from Homo sapiens (Human).